The following is a 221-amino-acid chain: MNSHSTDKRKKITRIGIGGPVGSGKTAIIEVITPILIKRGIKPLIITNDIVTTEDAKQVKRTLKGILDEEKILGVETGACPHTAVREDPSMNIAAVEEMEERFPDSDLIMIESGGDNLTLTFSPALADFYIYVIDVAEGEKIPRKNGPGLVQADILVINKIDLAPYVGASLDVMESDTKVVRGERPYILTNCKTGQGIEELVDMIMRDFLFTHVQPQGEHA.

19–26 lines the GTP pocket; it reads GPVGSGKT.

The protein belongs to the SIMIBI class G3E GTPase family. UreG subfamily. In terms of assembly, homodimer. UreD, UreF and UreG form a complex that acts as a GTP-hydrolysis-dependent molecular chaperone, activating the urease apoprotein by helping to assemble the nickel containing metallocenter of UreC. The UreE protein probably delivers the nickel.

It localises to the cytoplasm. Facilitates the functional incorporation of the urease nickel metallocenter. This process requires GTP hydrolysis, probably effectuated by UreG. This chain is Urease accessory protein UreG, found in Yersinia enterocolitica serotype O:8 / biotype 1B (strain NCTC 13174 / 8081).